Consider the following 349-residue polypeptide: MGDMGDPPKKKRLISLCVGCGNQIHDQYILRVSPDLEWHAACLKCAECNQYLDESCTCFVRDGKTYCKRDYIRLYGIKCAKCSIGFSKNDFVMRARSKVYHIECFRCVACSRQLIPGDEFALREDGLFCRADHDVVERASLGAGDPLSPLHPARPLQMAAEPISARQPALRPHVHKQPEKTTRVRTVLNEKQLHTLRTCYAANPRPDALMKEQLVEMTGLSPRVIRVWFQNKRCKDKKRSIMMKQLQQQQPNDKTNIQGMTGTPMVAASPERHDGGLQANPVEVQSYQPPWKVLSDFALQSDIDQPAFQQLVNFSEGGPGSNSTGSEVASMSSQLPDTPNSMVASPIEA.

LIM zinc-binding domains lie at 17–70 (CVGC…CKRD) and 79–133 (CAKC…RADH). The homeobox DNA-binding region spans 181–240 (TTRVRTVLNEKQLHTLRTCYAANPRPDALMKEQLVEMTGLSPRVIRVWFQNKRCKDKKRS). The LIM-binding domain (LID) stretch occupies residues 262–291 (GTPMVAASPERHDGGLQANPVEVQSYQPPW). Residues 312–349 (VNFSEGGPGSNSTGSEVASMSSQLPDTPNSMVASPIEA) form a disordered region. A compositionally biased stretch (polar residues) spans 321–343 (SNSTGSEVASMSSQLPDTPNSMV).

In terms of assembly, at neuronal promoters, displaces LDB1 from LHX3 LIM domain to form a ternary complex in which ISL1 contacts both LHX3 and LDB1; allosteric structural changes in the DNA binding domain of LHX3, induced by the ISL1:LHX3 interaction, may explain differences in sequence specificity of the different complexes. Interacts with LHX3. Interacts (via C-terminus) with POU4F2 (via C-terminus) isoform 1. Interacts with POU3F2. Interacts with POU4F3. Interacts (via N-terminal domain) with MLIP; the interaction represses ISL1 transactivator activity. Interacts with GCN5/KAT2A. Interactions of ISL1 with MLIP1 or KAT2A may be mutually exclusive. Ubiquitinated probably by WWP1 E3 ubiquitin ligase; ubiquitination is followed by protein degradation. Post-translationally, phosphorylated. In terms of tissue distribution, expressed in subsets of neurons of the adrenal medulla and dorsal root ganglion, inner nuclear and ganglion cell layers in the retina, the pineal and some regions of the brain.

It is found in the nucleus. Its function is as follows. DNA-binding transcriptional activator. Recognizes and binds to the consensus octamer binding site 5'-ATAATTAA-3' in promoter of target genes. Plays a fundamental role in the gene regulatory network essential for retinal ganglion cell (RGC) differentiation. Cooperates with the transcription factor POU4F2 to achieve maximal levels of expression of RGC target genes and RGC fate specification in the developing retina. Involved in the specification of motor neurons in cooperation with LHX3 and LDB1. Binds to insulin gene enhancer sequences. Essential for heart development. Marker of one progenitor cell population that give rise to the outflow tract, right ventricle, a subset of left ventricular cells, and a large number of atrial cells as well, its function is required for these progenitors to contribute to the heart. Controls the expression of FGF and BMP growth factors in this cell population and is required for proliferation and survival of cells within pharyngeal foregut endoderm and adjacent splanchnic mesoderm as well as for migration of cardiac progenitors into the heart. In Homo sapiens (Human), this protein is Insulin gene enhancer protein ISL-1 (ISL1).